A 134-amino-acid chain; its full sequence is Bradykinin-related peptides (134 aa).

The signal sequence occupies residues 1–22; the sequence is MAFLKKSLFLVLFLGVVSLSFC. Propeptides lie at residues 23-44, 71-82, and 99-121; these read EEEK…ESLG, RSISGLTPIRLS, and ISEA…PLRG. Residues 24 to 33 are compositionally biased toward basic and acidic residues; that stretch reads EEKREEHEEE. Residues 24–71 form a disordered region; it reads EEKREEHEEEKRDEEDAESLGKRYGGLSPLRISKRVPPGFTPFRSPAR. Residue P126 is modified to 4-hydroxyproline; partial; in form [Hyp3]-bradykinin and [Hyp3]-bradykinin-Val,Asp.

It belongs to the frog skin active peptide (FSAP) family. Bradykinin-related peptide subfamily. As to expression, expressed by the skin glands. Expression levels in inguinal glands are much higher than in granular glands.

It is found in the secreted. Functionally, may produce in vitro relaxation of rat arterial smooth muscle and constriction of intestinal smooth muscle. May target bradykinin receptors (BDKRB). This is Bradykinin-related peptides from Physalaemus nattereri (Cuyaba dwarf frog).